A 629-amino-acid chain; its full sequence is Polyadenylate-binding protein, cytoplasmic and nuclear (629 aa).

Residues 1–11 are compositionally biased toward polar residues; that stretch reads MSAAETNQLQE. The segment at 1 to 48 is disordered; that stretch reads MSAAETNQLQESMEKLNIGSTTEEQSAAAATTTADQSAEEQGESSGVA. Over residues 20–36 the composition is skewed to low complexity; it reads STTEEQSAAAATTTADQ. 4 consecutive RRM domains span residues 52-130, 140-217, 233-310, and 336-413; these read ASLY…WSQR, GNIF…KHIS, TNIY…RAQK, and VNLF…LAQR. The segment at 503–534 is disordered; sequence PPQFQQDFNGQNMRPQQQQQQQPRGGYYPNRN. Residues 505 to 517 are compositionally biased toward polar residues; sequence QFQQDFNGQNMRP. The PABC domain maps to 537 to 618; sequence SKRDLAAIIS…ALTAFEEYKK (82 aa).

Belongs to the polyadenylate-binding protein type-1 family.

It is found in the cytoplasm. Its subcellular location is the nucleus. Functionally, binds the poly(A) tail of mRNA. Appears to be an important mediator of the multiple roles of the poly(A) tail in mRNA biogenesis, stability and translation. In the nucleus, involved in both mRNA cleavage and polyadenylation. Is also required for efficient mRNA export to the cytoplasm. Acts in concert with a poly(A)-specific nuclease (PAN) to affect poly(A) tail shortening, which may occur concomitantly with either nucleocytoplasmic mRNA transport or translational initiation. In the cytoplasm, stimulates translation initiation and regulates mRNA decay through translation termination-coupled poly(A) shortening, probably mediated by PAN. The chain is Polyadenylate-binding protein, cytoplasmic and nuclear (PAB1) from Candida albicans (strain SC5314 / ATCC MYA-2876) (Yeast).